The primary structure comprises 229 residues: Transmembrane protein 182 (229 aa).

The signal sequence occupies residues 1-26 (MRLNIAIFFGALFGALGVLLFLVAFG). At 27–114 (SDYWLLATEV…SYDSAVIYRG (88 aa)) the chain is on the extracellular side. Residue Asn-47 is glycosylated (N-linked (GlcNAc...) asparagine). The interval 49–59 (TFHHEGFFWRC) is interaction with ITGB1. Asn-102 carries N-linked (GlcNAc...) asparagine glycosylation. The helical transmembrane segment at 115–135 (FWAVLMLLGVVAVVIASFLII) threads the bilayer. The Cytoplasmic segment spans residues 136 to 153 (CAAPFASHFLYKAGGGSY). Residues 154-174 (IAAGILFSLVVMLYVIWVQAV) traverse the membrane as a helical segment. The Extracellular portion of the chain corresponds to 175-200 (ADMESYRNMKMKDCLDFTPSVLYGWS). A helical transmembrane segment spans residues 201–221 (FFLAPAGIFFSLLAGLLFLVV). Topologically, residues 222–229 (GWHIQIHH) are cytoplasmic.

This sequence belongs to the TMEM182 family. Interacts with ITGB1.

Its subcellular location is the cell membrane. Negatively regulates myogenesis and skeletal muscle regeneration via its association with ITGB1. Modulates ITGB1 activation by decreasing ITGB1-LAMB1 interaction and inhibiting ITGB1-mediated intracellular signaling during myogenesis. This chain is Transmembrane protein 182 (TMEM182), found in Homo sapiens (Human).